The sequence spans 634 residues: Biosynthetic arginine decarboxylase (634 aa).

The residue at position 103 (K103) is an N6-(pyridoxal phosphate)lysine. Residue 283-293 (FDVGGGLGVDY) participates in substrate binding.

Belongs to the Orn/Lys/Arg decarboxylase class-II family. SpeA subfamily. It depends on Mg(2+) as a cofactor. The cofactor is pyridoxal 5'-phosphate.

It carries out the reaction L-arginine + H(+) = agmatine + CO2. The protein operates within amine and polyamine biosynthesis; agmatine biosynthesis; agmatine from L-arginine: step 1/1. In terms of biological role, catalyzes the biosynthesis of agmatine from arginine. In Photorhabdus laumondii subsp. laumondii (strain DSM 15139 / CIP 105565 / TT01) (Photorhabdus luminescens subsp. laumondii), this protein is Biosynthetic arginine decarboxylase.